A 367-amino-acid polypeptide reads, in one-letter code: Flagellar P-ring protein (367 aa).

Positions 1 to 21 are cleaved as a signal peptide; it reads MYVFKALAGIVLALVATLAHA.

The protein belongs to the FlgI family. As to quaternary structure, the basal body constitutes a major portion of the flagellar organelle and consists of four rings (L,P,S, and M) mounted on a central rod.

It localises to the periplasm. The protein resides in the bacterial flagellum basal body. Assembles around the rod to form the L-ring and probably protects the motor/basal body from shearing forces during rotation. This chain is Flagellar P-ring protein, found in Salmonella arizonae (strain ATCC BAA-731 / CDC346-86 / RSK2980).